The chain runs to 185 residues: Ribosome-recycling factor (185 aa).

This sequence belongs to the RRF family.

It localises to the cytoplasm. Its function is as follows. Responsible for the release of ribosomes from messenger RNA at the termination of protein biosynthesis. May increase the efficiency of translation by recycling ribosomes from one round of translation to another. The protein is Ribosome-recycling factor of Pectobacterium atrosepticum (strain SCRI 1043 / ATCC BAA-672) (Erwinia carotovora subsp. atroseptica).